Here is a 661-residue protein sequence, read N- to C-terminus: Fusaric acid cluster transcription factor FUB12 (661 aa).

The zn(2)-C6 fungal-type DNA-binding region spans 17–48 (CVPCRTRKIKCNAAVVGLPCGSCVSRECPDDC). 2 disordered regions span residues 57–131 (TVKV…RPPG) and 151–184 (SAAQ…PQLD). A compositionally biased stretch (polar residues) spans 73–98 (PDTNGSVLSPRQQQLPTNVSRQTTDS). Basic and acidic residues predominate over residues 99 to 109 (SHSDPVEESIH). The segment covering 110 to 119 (ASHTGSSLRN) has biased composition (polar residues). Positions 120-129 (DTPHSRDRRP) are enriched in basic and acidic residues.

The protein resides in the nucleus. Its function is as follows. Efflux pump involved in export of biosynthesis of fusaric acid, a mycotoxin with low to moderate toxicity to animals and humans, but with high phytotoxic properties. Constitutes a self-protecting mechanism of the fungus against critical levels of FSA within the cell. The sequence is that of Fusaric acid cluster transcription factor FUB12 from Fusarium oxysporum f. sp. lycopersici (strain 4287 / CBS 123668 / FGSC 9935 / NRRL 34936) (Fusarium vascular wilt of tomato).